We begin with the raw amino-acid sequence, 318 residues long: NADH-ubiquinone oxidoreductase chain 1 (318 aa).

Transmembrane regions (helical) follow at residues 2-22, 70-90, 100-120, 146-166, 171-191, 222-242, 254-276, and 294-314; these read FTIN…FLTL, MFII…IPLP, LGVL…LWSG, LAII…STLI, HLWL…STLA, LFFM…TILF, LYTI…IRAS, and LPLT…TSSI.

Belongs to the complex I subunit 1 family. As to quaternary structure, core subunit of respiratory chain NADH dehydrogenase (Complex I) which is composed of 45 different subunits.

It localises to the mitochondrion inner membrane. It carries out the reaction a ubiquinone + NADH + 5 H(+)(in) = a ubiquinol + NAD(+) + 4 H(+)(out). Functionally, core subunit of the mitochondrial membrane respiratory chain NADH dehydrogenase (Complex I) which catalyzes electron transfer from NADH through the respiratory chain, using ubiquinone as an electron acceptor. Essential for the catalytic activity and assembly of complex I. The sequence is that of NADH-ubiquinone oxidoreductase chain 1 (MT-ND1) from Ceratotherium simum (White rhinoceros).